The following is a 320-amino-acid chain: Cytochrome f (320 aa).

An N-terminal signal peptide occupies residues 1 to 35 (MQTRNTFSWIREEITRSISVSLMIYIITWASISSA). Y36, C56, C59, and H60 together coordinate heme. The chain crosses the membrane as a helical span at residues 286 to 306 (VQGLLFFLGSVVLAQIFLVLK).

It belongs to the cytochrome f family. As to quaternary structure, the 4 large subunits of the cytochrome b6-f complex are cytochrome b6, subunit IV (17 kDa polypeptide, petD), cytochrome f and the Rieske protein, while the 4 small subunits are PetG, PetL, PetM and PetN. The complex functions as a dimer. It depends on heme as a cofactor.

It is found in the plastid. The protein localises to the chloroplast thylakoid membrane. In terms of biological role, component of the cytochrome b6-f complex, which mediates electron transfer between photosystem II (PSII) and photosystem I (PSI), cyclic electron flow around PSI, and state transitions. This chain is Cytochrome f, found in Lepidium virginicum (Virginia pepperweed).